We begin with the raw amino-acid sequence, 509 residues long: ATP synthase subunit alpha (509 aa).

Residue 169 to 176 coordinates ATP; it reads GDRQTGKT.

The protein belongs to the ATPase alpha/beta chains family. As to quaternary structure, F-type ATPases have 2 components, CF(1) - the catalytic core - and CF(0) - the membrane proton channel. CF(1) has five subunits: alpha(3), beta(3), gamma(1), delta(1), epsilon(1). CF(0) has three main subunits: a(1), b(2) and c(9-12). The alpha and beta chains form an alternating ring which encloses part of the gamma chain. CF(1) is attached to CF(0) by a central stalk formed by the gamma and epsilon chains, while a peripheral stalk is formed by the delta and b chains.

The protein resides in the cell inner membrane. The enzyme catalyses ATP + H2O + 4 H(+)(in) = ADP + phosphate + 5 H(+)(out). Produces ATP from ADP in the presence of a proton gradient across the membrane. The alpha chain is a regulatory subunit. In Methylorubrum extorquens (strain CM4 / NCIMB 13688) (Methylobacterium extorquens), this protein is ATP synthase subunit alpha.